The sequence spans 80 residues: MAGGPRRGGRRRKKVCYFTANGITHIDYKDTELLKRFISERGKILPRRVTGTSAKYQRMLTTAIKRSRHMALLPYVKEEQ.

It belongs to the bacterial ribosomal protein bS18 family. Part of the 30S ribosomal subunit. Forms a tight heterodimer with protein bS6.

Binds as a heterodimer with protein bS6 to the central domain of the 16S rRNA, where it helps stabilize the platform of the 30S subunit. In Staphylococcus aureus (strain Mu3 / ATCC 700698), this protein is Small ribosomal subunit protein bS18.